The primary structure comprises 160 residues: S-ribosylhomocysteine lyase (160 aa).

Residues His57, His61, and Cys127 each contribute to the Fe cation site.

The protein belongs to the LuxS family. In terms of assembly, homodimer. Fe cation serves as cofactor.

It catalyses the reaction S-(5-deoxy-D-ribos-5-yl)-L-homocysteine = (S)-4,5-dihydroxypentane-2,3-dione + L-homocysteine. Its function is as follows. Involved in the synthesis of autoinducer 2 (AI-2) which is secreted by bacteria and is used to communicate both the cell density and the metabolic potential of the environment. The regulation of gene expression in response to changes in cell density is called quorum sensing. Catalyzes the transformation of S-ribosylhomocysteine (RHC) to homocysteine (HC) and 4,5-dihydroxy-2,3-pentadione (DPD). This chain is S-ribosylhomocysteine lyase, found in Streptococcus uberis (strain ATCC BAA-854 / 0140J).